Here is a 334-residue protein sequence, read N- to C-terminus: Thiamine-binding periplasmic protein (334 aa).

The first 23 residues, 1–23 (MRLLSLLTFSLFAVIGLAPAAQA), serve as a signal peptide directing secretion. Residues 64–65 (DG), 166–167 (AT), Trp202, and 220–223 (YTTS) contribute to the thiamine site.

Belongs to the bacterial solute-binding protein 1 family. The complex is composed of two ATP-binding proteins (ThiQ), two transmembrane proteins (ThiP) and a solute-binding protein (ThiB).

The protein localises to the periplasm. Its function is as follows. Part of the ABC transporter complex ThiBPQ involved in thiamine import. This Brucella abortus biovar 1 (strain 9-941) protein is Thiamine-binding periplasmic protein (thiB).